The sequence spans 565 residues: DNA repair protein RAD7 (565 aa).

2 disordered regions span residues 1–22 (MYRS…PNSA) and 41–68 (WYQR…FTAE). The interval 1-200 (MYRSRNRPKR…SKLVFNKLRD (200 aa)) is hydrophilic. Over residues 47 to 62 (KKQEDATDEKKGKAED) the composition is skewed to basic and acidic residues. Residues S64 and S85 each carry the phosphoserine modification. A disordered region spans residues 105–137 (ADSDEEEYETSHISDTPVSLSSANDRESLTKKR). Positions 115–127 (SHISDTPVSLSSA) are enriched in polar residues.

This sequence to S.pombe SpCC613.14. Component of the global genome repair (GGR) complex composed of at least ABF1, RAD7 and RAD16. Interacts with ELC1.

Functionally, component of the global genome repair (GGR) complex which promotes global genome nucleotide excision repair (GG-NER) which removes DNA damage from nontranscribing DNA. This protein is one of 10 proteins (RAD1, 2,3,4,7,10,14, 16,23 and MMS19) involved in excision repair of DNA damaged with UV light, bulky adducts, or cross-linking agents. This chain is DNA repair protein RAD7 (RAD7), found in Saccharomyces cerevisiae (strain ATCC 204508 / S288c) (Baker's yeast).